A 465-amino-acid chain; its full sequence is Ribulose bisphosphate carboxylase large chain (465 aa).

The residue at position 4 (Lys-4) is an N6,N6,N6-trimethyllysine. Positions 113 and 163 each coordinate substrate. Lys-165 (proton acceptor) is an active-site residue. Lys-167 contacts substrate. Mg(2+) is bound by residues Lys-191, Asp-193, and Glu-194. At Lys-191 the chain carries N6-carboxylysine. His-284 serves as the catalytic Proton acceptor. The substrate site is built by Arg-285, His-317, and Ser-369.

It belongs to the RuBisCO large chain family. Type I subfamily. In terms of assembly, heterohexadecamer of 8 large chains and 8 small chains; disulfide-linked. The disulfide link is formed within the large subunit homodimers. Mg(2+) serves as cofactor. Post-translationally, the disulfide bond which can form in the large chain dimeric partners within the hexadecamer appears to be associated with oxidative stress and protein turnover.

The protein resides in the plastid. The protein localises to the chloroplast. It catalyses the reaction 2 (2R)-3-phosphoglycerate + 2 H(+) = D-ribulose 1,5-bisphosphate + CO2 + H2O. The enzyme catalyses D-ribulose 1,5-bisphosphate + O2 = 2-phosphoglycolate + (2R)-3-phosphoglycerate + 2 H(+). RuBisCO catalyzes two reactions: the carboxylation of D-ribulose 1,5-bisphosphate, the primary event in carbon dioxide fixation, as well as the oxidative fragmentation of the pentose substrate in the photorespiration process. Both reactions occur simultaneously and in competition at the same active site. This chain is Ribulose bisphosphate carboxylase large chain, found in Fragaria ananassa (Strawberry).